Consider the following 159-residue polypeptide: MRLHVKLKEFLSMFFMAILFFPAFNASLFFTGVKPLYSIIKCSTEIFYDWRMLILCFGFMSFSFLNIHVILLTIIKSFLIKKTKVVNFATDITIQLTLIFLLIAIVIAPLIAPFVTGYVNTNYHPCGNNTGIFPGAIYIKNGMKCNNGYISRKEDSAVK.

The next 3 membrane-spanning stretches (helical) occupy residues 10–30 (FLSMFFMAILFFPAFNASLFF), 52–72 (MLILCFGFMSFSFLNIHVILL), and 96–116 (LTLIFLLIAIVIAPLIAPFVT).

Its subcellular location is the membrane. This is an uncharacterized protein from Escherichia coli (strain K12).